A 58-amino-acid chain; its full sequence is DNA-directed RNA polymerases I, II, and III subunit RPABC4 (58 aa).

Zn(2+) contacts are provided by Cys-19, Cys-22, Cys-36, and Cys-39. Residues 19-39 (CGECHTENEIKSRDPIRCREC) form a C4-type zinc finger.

This sequence belongs to the archaeal Rpo12/eukaryotic RPC10 RNA polymerase subunit family. As to quaternary structure, component of the RNA polymerase I (Pol I), RNA polymerase II (Pol II) and RNA polymerase III (Pol III) complexes consisting of at least 13, 12 and 17 subunits, respectively. Pol I complex consists of a ten-subunit catalytic core composed of POLR1A/RPA1, POLR1B/RPA2, POLR1C/RPAC1, POLR1D/RPAC2, POLR1H/RPA12, POLR2E/RPABC1, POLR2F/RPABC2, POLR2H/RPABC3, POLR2K/RPABC4 and POLR2L/RPABC5; a mobile stalk subunit POLR1F/RPA43 protruding from the core and additional subunits homologous to general transcription factors POLR1E/RPA49 and POLR1G/RPA34. Part of Pol I pre-initiation complex (PIC), in which Pol I core assembles with RRN3 and promoter-bound UTBF and SL1/TIF-IB complex. Pol II complex contains a ten-subunit catalytic core composed of POLR2A/RPB1, POLR2B/RPB2, POLR2C/RPB3, POLR2I/RPB9, POLR2J/RPB11, POLR2E/RPABC1, POLR2F/RPABC2, POLR2H/RPABC3, POLR2K/RPABC4 and POLR2L/RPABC5 and a mobile stalk composed of two subunits POLR2D/RPB4 and POLR2G/RPB7. Part of Pol II(G) complex, in which Pol II core associates with an additional subunit POLR2M; unlike conventional Pol II, Pol II(G) functions as a transcriptional repressor. Part of TBP-based Pol II pre-initiation complex (PIC), in which Pol II core assembles with general transcription factors and other specific initiation factors including GTF2E1, GTF2E2, GTF2F1, GTF2F2, TCEA1, ERCC2, ERCC3, GTF2H2, GTF2H3, GTF2H4, GTF2H5, GTF2A1, GTF2A2, GTF2B and TBP; this large multi-subunit PIC complex mediates DNA unwinding and targets Pol II core to the transcription start site where the first phosphodiester bond forms. Pol III complex consists of a ten-subunit catalytic core composed of POLR3A/RPC1, POLR3B/RPC2, POLR1C/RPAC1, POLR1D/RPAC2, POLR3K/RPC10, POLR2E/RPABC1, POLR2F/RPABC2, POLR2H/RPABC3, POLR2K/RPABC4 and POLR2L/RPABC5; a mobile stalk composed of two subunits POLR3H/RPC8 and CRCP/RPC9, protruding from the core and functioning primarily in transcription initiation; and additional subunits homologous to general transcription factors of the RNA polymerase II machinery, POLR3C/RPC3-POLR3F/RPC6-POLR3G/RPC7 heterotrimer required for transcription initiation and POLR3D/RPC4-POLR3E/RPC5 heterodimer involved in both transcription initiation and termination.

It is found in the nucleus. It localises to the nucleolus. DNA-dependent RNA polymerase catalyzes the transcription of DNA into RNA using the four ribonucleoside triphosphates as substrates. Common component of RNA polymerases I, II and III which synthesize ribosomal RNA precursors, mRNA precursors and many functional non-coding RNAs, and a small RNAs, such as 5S rRNA and tRNAs, respectively. The polypeptide is DNA-directed RNA polymerases I, II, and III subunit RPABC4 (Polr2k) (Mus musculus (Mouse)).